The chain runs to 457 residues: Argininosuccinate lyase (457 aa).

The protein belongs to the lyase 1 family. Argininosuccinate lyase subfamily.

The protein localises to the cytoplasm. The catalysed reaction is 2-(N(omega)-L-arginino)succinate = fumarate + L-arginine. The protein operates within amino-acid biosynthesis; L-arginine biosynthesis; L-arginine from L-ornithine and carbamoyl phosphate: step 3/3. The protein is Argininosuccinate lyase of Shigella dysenteriae serotype 1 (strain Sd197).